A 263-amino-acid polypeptide reads, in one-letter code: Ribosomal RNA small subunit methyltransferase A (263 aa).

Positions 20, 22, 47, 68, 90, and 110 each coordinate S-adenosyl-L-methionine.

This sequence belongs to the class I-like SAM-binding methyltransferase superfamily. rRNA adenine N(6)-methyltransferase family. RsmA subfamily.

It localises to the cytoplasm. It catalyses the reaction adenosine(1518)/adenosine(1519) in 16S rRNA + 4 S-adenosyl-L-methionine = N(6)-dimethyladenosine(1518)/N(6)-dimethyladenosine(1519) in 16S rRNA + 4 S-adenosyl-L-homocysteine + 4 H(+). In terms of biological role, specifically dimethylates two adjacent adenosines (A1518 and A1519) in the loop of a conserved hairpin near the 3'-end of 16S rRNA in the 30S particle. May play a critical role in biogenesis of 30S subunits. The chain is Ribosomal RNA small subunit methyltransferase A from Chlorobium limicola (strain DSM 245 / NBRC 103803 / 6330).